Reading from the N-terminus, the 188-residue chain is Putative lipoprotein LprB (188 aa).

The N-terminal stretch at 1 to 27 is a signal peptide; it reads MRCDVRALALAARGLIELMIVIPMVAG. Cys28 is lipidated: N-palmitoyl cysteine. A lipid anchor (S-diacylglycerol cysteine) is attached at Cys28.

The protein localises to the cell membrane. The sequence is that of Putative lipoprotein LprB (lprB) from Mycobacterium leprae (strain TN).